Reading from the N-terminus, the 593-residue chain is Efflux pump FUBT (593 aa).

A disordered region spans residues M1–V44. A compositionally biased stretch (polar residues) spans S9–E30. N19 carries an N-linked (GlcNAc...) asparagine glycan. A run of 12 helical transmembrane segments spans residues W98–Y118, V135–A155, F167–I187, F195–M215, M227–G247, W254–I274, I337–F357, I367–A387, L410–T430, I438–L458, I468–F488, and W503–Y523. Residues T570–V593 form a disordered region.

The protein belongs to the major facilitator superfamily. DHA1 family. Polyamines/proton antiporter (TC 2.A.1.2.16) subfamily.

The protein localises to the cell membrane. In terms of biological role, efflux pump involved in export of fusaric acid, a mycotoxin with low to moderate toxicity to animals and humans, but with high phytotoxic properties. Constitutes a self-protecting mechanism of the fungus against critical levels of FSA within the cell. The polypeptide is Efflux pump FUBT (Fusarium oxysporum (Fusarium vascular wilt)).